The following is a 2048-amino-acid chain: MSGRQRTLFQTWGSSISRSSGTPGCSSGTERPQSPGSSKAPLPAAAEAQLESDDDVLLVAAYEAERQLCLENGGFCTSAGALWIYPTNCPVRDYQLHISRAALFCNTLVCLPTGLGKTFIAAVVMYNFYRWFPSGKVVFMAPTKPLVTQQIEACYQVMGIPQSHMAEMTGSTQASTRKEIWCSKRVLFLTPQVMVNDLSRGACPAAEIKCLVIDEAHKALGNYAYCQVVRELVKYTNHFRILALSATPGSDIKAVQQVITNLLIGQIELRSEDSPDILTYSHERKVEKLIVPLGEELAAIQKTYIQILESFARSLIQRNVLMRRDIPNLTKYQIILARDQFRKNPSPNIVGIQQGIIEGEFAICISLYHGYELLQQMGMRSLYFFLCGIMDGTKGMTRSKNELGRNEDFMKLYNHLECMFARTRSTSANGISAIQQGDKNKKFVYSHPKLKKLEEVVIEHFKSWNAENTTEKKRDETRVMIFSSFRDSVQEIAEMLSQHQPIIRVMTFVGHASGKSTKGFTQKEQLEVVKQFRDGGYNTLVSTCVGEEGLDIGEVDLIICFDSQKSPIRLVQRMGRTGRKRQGRIVIILSEGREERIYNQSQSNKRSIYKAISSNRQVLHFYQRSPRMVPDGINPKLHKMFITHGVYEPEKPSRNLQRKSSIFSYRDGMRQSSLKKDWFLSEEEFKLWNRLYRLRDSDEIKEITLPQVQFSSLQNEENKPAQESTTGIHQLSLSEWRLWQDHPLPTHQVDHSDRCRHFIGLMQMIEGMRHEEGECSYELEVESYLQMEDVTSTFIAPRNESNNLASDTFITHKKSSFIKNINQGSSSSVIESDEECAEIVKQTHIKPTKIVSLKKKVSKEIKKDQLKKENNHGIIDSVDNDRNSTVENIFQEDLPNDKRTSDTDEIAATCTINENVIKEPCVLLTECQFTNKSTSSLAGNVLDSGYNSFNDEKSVSSNLFLPFEEELYIVRTDDQFYNCHSLTKEVLANVERFLSYSPPPLSGLSDLEYEIAKGTALENLLFLPCAEHLRSDKCTCLLSHSAVNSQQNLELNSLKCINYPSEKSCLYDIPNDNISDEPSLCDCDVHKHNQNENLVPNNRVQIHRSPAQNLVGENNHDVDNSDLPVLSTDQDESLLLFEDVNTEFDDVSLSPLNSKSESLPVSDKTAISETPLVSQFLISDELLLDNNSELQDQITRDANSFKSRDQRGVQEEKVKNHEDIFDCSRDLFSVTFDLGFCSPDSDDEILEHTSDSNRPLDDLYGRYLEIKEISDANYVSNQALIPRDHSKNFTSGTVIIPSNEDMQNPNYVHLPLSAAKNEELLSPGYSQFSLPVQKKVMSTPLSKSNTLNSFSKIRKEILKTPDSSKEKVNLQRFKEALNSTFDYSEFSLEKSKSSGPMYLHKSCHSVEDGQLLTSNESEDDEIFRRKVKRAKGNVLNSPEDQKNSEVDSPLHAVKKRRFPINRSELSSSDESENFPKPCSQLEDFKVCNGNARRGIKVPKRQSHLKHVARKFLDDEAELSEEDAEYVSSDENDESENEQDSSLLDFLNDETQLSQAINDSEMRAIYMKSLRSPMMNNKYKMIHKTHKNINIFSQIPEQDETYLEDSFCVDEEESCKGQSSEEEVCVDFNLITDDCFANSKKYKTRRAVMLKEMMEQNCAHSKKKLSRIILPDDSSEEENNVNDKRESNIAVNPSTVKKNKQQDHCLNSVPSGSSAQSKVRSTPRVNPLAKQSKQTSLNLKDTISEVSDFKPQNHNEVQSTTPPFTTVDSQKDCRKFPVPQKDGSALEDSSTSGASCSKSRPHLAGTHTSLRLPQEGKGTCILVGGHEITSGLEVISSLRAIHGLQVEVCPLNGCDYIVSNRMVVERRSQSEMLNSVNKNKFIEQIQHLQSMFERICVIVEKDREKTGDTSRMFRRTKSYDSLLTTLIGAGIRILFSSCQEETADLLKELSLVEQRKNVGIHVPTVVNSNKSEALQFYLSIPNISYITALNMCHQFSSVKRMANSSLQEISMYAQVTHQKAEEIYRYIHYVFDIQMLPNDLNQDRLKSDI.

Positions 1–37 (MSGRQRTLFQTWGSSISRSSGTPGCSSGTERPQSPGS) are enriched in polar residues. Residues 1-45 (MSGRQRTLFQTWGSSISRSSGTPGCSSGTERPQSPGSSKAPLPAA) are disordered. Position 34 is a phosphoserine (serine 34). Positions 98 to 266 (ISRAALFCNT…QVITNLLIGQ (169 aa)) constitute a Helicase ATP-binding domain. 111 to 118 (LPTGLGKT) contributes to the ATP binding site. Positions 214-217 (DEAH) match the DEAH box motif. The 176-residue stretch at 452–627 (KLEEVVIEHF…VLHFYQRSPR (176 aa)) folds into the Helicase C-terminal domain. Residues 661–800 (SIFSYRDGMR…TSTFIAPRNE (140 aa)) form an interaction with CENPS/CENPSX region. 3 disordered regions span residues 1433-1476 (NVLN…NFPK), 1518-1540 (LSEEDAEYVSSDENDESENEQDS), and 1668-1809 (ILPD…HTSL). The span at 1518–1538 (LSEEDAEYVSSDENDESENEQ) shows a compositional bias: acidic residues. Phosphoserine occurs at positions 1673 and 1674. Polar residues-rich tracts occupy residues 1703–1745 (HCLN…ISEV), 1753–1767 (HNEVQSTTPPFTTVD), and 1786–1797 (EDSSTSGASCSK). The tract at residues 1727–2048 (LAKQSKQTSL…LNQDRLKSDI (322 aa)) is interaction with FAAP24.

It belongs to the DEAD box helicase family. DEAH subfamily. FANCM sub-subfamily. Component of the Fanconi anemia (FA) core complex, which consists of CENPS, CENPX, FANCA, FANCB, FANCC, FANCE, FANCF, FANCG, FANCL, FANCM, FAAP24 and FAAP100. The FA core complex associates with Bloom syndrome (BLM) complex, which consists of at least BLM, DNA topoisomerase 3-alpha/TOP3A, RMI1/BLAP75, RPA1/RPA70 and RPA2/RPA32. This supercomplex between FA and BLM complexes has been called BRAFT. Forms a discrete complex with CENPS and CENPX, called FANCM-MHF; this interaction stimulates DNA binding and replication fork remodeling by FANCM and stabilizes the binding partners. Forms a heterodimer with FAAP24; this interaction increases FANCM single-stranded DNA-binding activity. Post-translationally, phosphorylated; hyperphosphorylated in response to genotoxic stress. As to expression, expressed in germ cells of fetal and adult ovaries. In fetal ovaries, it is present in oogonia but expression is stronger in pachytene stage oocytes. Expressed in oocytes arrested at the diplotene stage of prophase I during the last trimester of pregnancy and in adults. Expressed in the testis.

It localises to the nucleus. The enzyme catalyses ATP + H2O = ADP + phosphate + H(+). In terms of biological role, DNA-dependent ATPase component of the Fanconi anemia (FA) core complex. Required for the normal activation of the FA pathway, leading to monoubiquitination of the FANCI-FANCD2 complex in response to DNA damage, cellular resistance to DNA cross-linking drugs, and prevention of chromosomal breakage. In complex with CENPS and CENPX, binds double-stranded DNA (dsDNA), fork-structured DNA (fsDNA) and Holliday junction substrates. Its ATP-dependent DNA branch migration activity can process branched DNA structures such as a movable replication fork. This activity is strongly stimulated in the presence of CENPS and CENPX. In complex with FAAP24, efficiently binds to single-strand DNA (ssDNA), splayed-arm DNA, and 3'-flap substrates. In vitro, on its own, strongly binds ssDNA oligomers and weakly fsDNA, but does not bind to dsDNA. This is Fanconi anemia group M protein (FANCM) from Homo sapiens (Human).